The chain runs to 817 residues: Protein-glutamine gamma-glutamyltransferase K (817 aa).

Disordered regions lie at residues 1–38 (MMDG…SRRG) and 59–105 (DDWG…DGTI). The tract at residues 1–100 (MMDGPRSDVG…VSRGSGVNAA (100 aa)) is membrane anchorage region. The span at 17–26 (LQPPTTPSPE) shows a compositional bias: pro residues. T22 bears the Phosphothreonine mark. S24, S68, S82, S85, S92, and S95 each carry phosphoserine. Over residues 71–84 (RGSSSGTRRPGSRG) the composition is skewed to low complexity. Active-site residues include C377, H436, and D459. Residues N499, D501, E548, and E553 each contribute to the Ca(2+) site. The tract at residues 793–817 (GGFFSDAGGDSHLGETIPMASRGGA) is disordered.

It belongs to the transglutaminase superfamily. Transglutaminase family. Interacts with PLAAT4. The cofactor is Ca(2+). In terms of processing, palmitoylated. Post-translationally, the membrane anchorage region possesses a cluster of five cysteines within which fatty acid(s) may become thioester-linked. It is subject to phorbol ester-stimulated phosphorylation and is hypersensitive to proteolysis, which releases the enzyme in a soluble form. Tyrosine-phosphorylated.

It localises to the membrane. The enzyme catalyses L-glutaminyl-[protein] + L-lysyl-[protein] = [protein]-L-lysyl-N(6)-5-L-glutamyl-[protein] + NH4(+). Functionally, catalyzes the cross-linking of proteins and the conjugation of polyamines to proteins. Responsible for cross-linking epidermal proteins during formation of the stratum corneum. Involved in cell proliferation. This Homo sapiens (Human) protein is Protein-glutamine gamma-glutamyltransferase K (TGM1).